A 396-amino-acid polypeptide reads, in one-letter code: Acetate kinase (396 aa).

Mg(2+) is bound at residue Asn-8. Lys-15 contributes to the ATP binding site. Arg-89 is a substrate binding site. The Proton donor/acceptor role is filled by Asp-146. Residues 206–210 (HIGNG), 283–285 (DMR), and 331–335 (GMGEN) each bind ATP. Glu-383 contacts Mg(2+).

The protein belongs to the acetokinase family. As to quaternary structure, homodimer. Mg(2+) is required as a cofactor. Mn(2+) serves as cofactor.

The protein localises to the cytoplasm. It catalyses the reaction acetate + ATP = acetyl phosphate + ADP. It participates in metabolic intermediate biosynthesis; acetyl-CoA biosynthesis; acetyl-CoA from acetate: step 1/2. Catalyzes the formation of acetyl phosphate from acetate and ATP. Can also catalyze the reverse reaction. This Streptococcus uberis (strain ATCC BAA-854 / 0140J) protein is Acetate kinase.